The following is a 132-amino-acid chain: Small ribosomal subunit protein uS8 (132 aa).

Belongs to the universal ribosomal protein uS8 family. As to quaternary structure, part of the 30S ribosomal subunit. Contacts proteins S5 and S12.

In terms of biological role, one of the primary rRNA binding proteins, it binds directly to 16S rRNA central domain where it helps coordinate assembly of the platform of the 30S subunit. The protein is Small ribosomal subunit protein uS8 of Bacillus subtilis (strain 168).